The primary structure comprises 320 residues: Tyrosine recombinase Synpcc7942_B2651 (320 aa).

The Core-binding (CB) domain occupies 16–106 (VQDWDVLQML…ALKSLVRFSR (91 aa)). One can recognise a Tyr recombinase domain in the interval 127-313 (RDTTGTTPER…RQDFQGECTE (187 aa)). Catalysis depends on residues R167, K193, H264, R267, and H291. The active-site O-(3'-phospho-DNA)-tyrosine intermediate is Y300.

This sequence belongs to the 'phage' integrase family.

It localises to the cytoplasm. Functionally, site-specific tyrosine recombinase, which acts by catalyzing the cutting and rejoining of the recombining DNA molecules. The protein is Tyrosine recombinase Synpcc7942_B2651 of Synechococcus elongatus (strain ATCC 33912 / PCC 7942 / FACHB-805) (Anacystis nidulans R2).